A 518-amino-acid chain; its full sequence is Cytochrome P450 26C1 (518 aa).

Residues 293 to 313 (LLFAAFFTTASASTSLILLLL) traverse the membrane as a helical segment. Cys-455 provides a ligand contact to heme.

It belongs to the cytochrome P450 family. The cofactor is heme.

The protein resides in the membrane. It carries out the reaction an organic molecule + reduced [NADPH--hemoprotein reductase] + O2 = an alcohol + oxidized [NADPH--hemoprotein reductase] + H2O + H(+). It catalyses the reaction all-trans-retinoate + reduced [NADPH--hemoprotein reductase] + O2 = all-trans-4-hydroxyretinoate + oxidized [NADPH--hemoprotein reductase] + H2O + H(+). The enzyme catalyses all-trans-4-hydroxyretinoate + reduced [NADPH--hemoprotein reductase] + O2 = all-trans-4-oxoretinoate + oxidized [NADPH--hemoprotein reductase] + 2 H2O + H(+). The catalysed reaction is 9-cis-retinoate + reduced [NADPH--hemoprotein reductase] + O2 = 9-cis-4-hydroxyretinoate + oxidized [NADPH--hemoprotein reductase] + H2O + H(+). It carries out the reaction 9-cis-4-hydroxyretinoate + reduced [NADPH--hemoprotein reductase] + O2 = 9-cis-4-oxoretinoate + oxidized [NADPH--hemoprotein reductase] + 2 H2O + H(+). It catalyses the reaction all-trans-4-hydroxy-13,14-dihydroretinoate + reduced [NADPH--hemoprotein reductase] + O2 = all-trans-4-oxo-13,14-dihydroretinoate + oxidized [NADPH--hemoprotein reductase] + 2 H2O + H(+). The enzyme catalyses all-trans-13,14-dihydroretinoate + reduced [NADPH--hemoprotein reductase] + O2 = all-trans-4-hydroxy-13,14-dihydroretinoate + oxidized [NADPH--hemoprotein reductase] + H2O + H(+). Its function is as follows. A cytochrome P450 monooxygenase involved in the metabolism of retinoates (RAs), the active metabolites of vitamin A, and critical signaling molecules in animals. RAs exist as at least four different isomers: all-trans-RA (atRA), 9-cis-RA, 13-cis-RA, and 9,13-dicis-RA, where atRA is considered to be the biologically active isomer, although 9-cis-RA and 13-cis-RA also have activity. Catalyzes the oxidation of atRA primarily at C-4. Oxidation of atRA limits its biological activity and initiates a degradative process leading to its eventual elimination, thereby contributes to the regulation of atRA homeostasis and signaling. Able to metabolize other RAs such as 9-cis with high efficiency. Can oxidize all-trans-13,14-dihydroretinoate (DRA) to metabolites which could include all-trans-4-oxo-DRA, all-trans-4-hydroxy-DRA, all-trans-5,8-epoxy-DRA, and all-trans-18-hydroxy-DRA. Shares sequence similarity with other CYP26 family members, but has higher affinity to 9-cis-RA and is much less sensitive to the inhibitory effects of ketoconazole. In cooperation with Cyp26a1, contributes to the CNS patterning and the development of regions of higher visual acuity. The sequence is that of Cytochrome P450 26C1 from Mus musculus (Mouse).